Consider the following 520-residue polypeptide: Arabinose import ATP-binding protein AraG (520 aa).

The segment covering 1–10 (MTTQTMTAVS) has biased composition (polar residues). Positions 1–27 (MTTQTMTAVSGNDGDTGGDAAESPPGG) are disordered. 2 consecutive ABC transporter domains span residues 30–265 (LALD…MVGR) and 265–516 (RSIE…LIKL). Position 62-69 (62-69 (GENGAGKS)) interacts with ATP.

It belongs to the ABC transporter superfamily. Arabinose importer (TC 3.A.1.2.2) family. The complex is composed of two ATP-binding proteins (AraG), two transmembrane proteins (AraH) and a solute-binding protein (AraF).

The protein resides in the cell inner membrane. It carries out the reaction L-arabinose(out) + ATP + H2O = L-arabinose(in) + ADP + phosphate + H(+). Its function is as follows. Part of the ABC transporter complex AraFGH involved in L-arabinose import. Responsible for energy coupling to the transport system. This chain is Arabinose import ATP-binding protein AraG, found in Azospirillum brasilense.